Here is a 137-residue protein sequence, read N- to C-terminus: Profilin-3 (137 aa).

This sequence belongs to the profilin family. As to quaternary structure, interacts with ACTRT3. In terms of tissue distribution, detected in round spermatids.

The protein localises to the cytoplasm. It localises to the cytoskeleton. It is found in the nucleus. In terms of biological role, binds to actin and affects the structure of the cytoskeleton. Slightly reduces actin polymerization. Binds to poly-L-proline, phosphatidylinositol 3-phosphate (PtdIns(3)P), phosphatidylinositol 4,5-bisphosphate (PtdIns(4,5)P2), and phosphatidylinositol 4-phosphate (PtdIns(4)P). May be involved in spermatogenesis. In Rattus norvegicus (Rat), this protein is Profilin-3 (Pfn3).